The chain runs to 337 residues: Leucine-rich repeat-containing protein 39 (337 aa).

LRR repeat units follow at residues 84-105 (QLQEWQLHRTGLLKIPEFIGRF), 107-128 (HLIVLDLSRNTISEIPRGIGLL), 130-152 (RLQELILSYNKIKTVPKELSNCT), 153-176 (SLEKLELAVNRDISDLPPELSKLL), 177-198 (KLTHLDLSMNQFTTIPHAVLDM), 200-221 (ALEWLDMGSNSLQQLPDSLDRM), 223-244 (SLHTLWLQRNEITCLPETIKNM), 246-267 (NLGTLVLSNNKLQDIPGCMEEM), and 269-290 (NLRFVNFRDNPLRLEVTLPPSD).

In terms of assembly, interacts with MYH7 (via C-terminus). As to expression, expressed in heart and skeletal muscle.

Its subcellular location is the cytoplasm. The protein resides in the myofibril. The protein localises to the sarcomere. It is found in the m line. Its function is as follows. Component of the sarcomeric M-band which plays a role in myocyte response to biomechanical stress. May regulate expression of other M-band proteins via an SRF-dependent pathway. Important for normal contractile function in heart. In Mus musculus (Mouse), this protein is Leucine-rich repeat-containing protein 39.